Consider the following 207-residue polypeptide: uncharacterized protein (207 aa).

The first 19 residues, 1–19 (MRHGLLALICWLCCVVAHS), serve as a signal peptide directing secretion.

It to P.aeruginosa PA4490 and T.maritima TM0986.

This is an uncharacterized protein from Escherichia coli (strain K12).